Reading from the N-terminus, the 127-residue chain is Ribonuclease P protein component (127 aa).

This sequence belongs to the RnpA family. In terms of assembly, consists of a catalytic RNA component (M1 or rnpB) and a protein subunit.

It catalyses the reaction Endonucleolytic cleavage of RNA, removing 5'-extranucleotides from tRNA precursor.. Its function is as follows. RNaseP catalyzes the removal of the 5'-leader sequence from pre-tRNA to produce the mature 5'-terminus. It can also cleave other RNA substrates such as 4.5S RNA. The protein component plays an auxiliary but essential role in vivo by binding to the 5'-leader sequence and broadening the substrate specificity of the ribozyme. In Synechococcus sp. (strain RCC307), this protein is Ribonuclease P protein component.